The sequence spans 321 residues: Glycerol-3-phosphate dehydrogenase [NAD(P)+] (321 aa).

Residues W15, R35, and K101 each contribute to the NADPH site. The sn-glycerol 3-phosphate site is built by K101 and G129. A133 lines the NADPH pocket. Positions 184, 237, 247, 248, and 249 each coordinate sn-glycerol 3-phosphate. K184 acts as the Proton acceptor in catalysis. R248 contacts NADPH. Residues V268 and E270 each coordinate NADPH.

The protein belongs to the NAD-dependent glycerol-3-phosphate dehydrogenase family.

It localises to the cytoplasm. The catalysed reaction is sn-glycerol 3-phosphate + NAD(+) = dihydroxyacetone phosphate + NADH + H(+). It catalyses the reaction sn-glycerol 3-phosphate + NADP(+) = dihydroxyacetone phosphate + NADPH + H(+). The protein operates within membrane lipid metabolism; glycerophospholipid metabolism. In terms of biological role, catalyzes the reduction of the glycolytic intermediate dihydroxyacetone phosphate (DHAP) to sn-glycerol 3-phosphate (G3P), the key precursor for phospholipid synthesis. This is Glycerol-3-phosphate dehydrogenase [NAD(P)+] from Acidiphilium cryptum (strain JF-5).